Here is a 759-residue protein sequence, read N- to C-terminus: Phosphoribosylformylglycinamidine synthase subunit PurL (759 aa).

The active site involves His34. Tyr37 is an ATP binding site. Position 95 (Glu95) interacts with Mg(2+). Residues 96 to 99 and Arg118 contribute to the substrate site; that span reads SHNH. The active-site Proton acceptor is His97. Residue Asp119 coordinates Mg(2+). Gln243 is a binding site for substrate. Residue Asp271 coordinates Mg(2+). Residue 315–317 participates in substrate binding; sequence ESQ. The disordered stretch occupies residues 388–422; that stretch reads DGAPMNDLASESPTQPDRDLPDPEPSLDEAVESVV. Asp520 and Gly557 together coordinate ATP. Residue Asn558 participates in Mg(2+) binding. Substrate is bound at residue Ser560.

Belongs to the FGAMS family. As to quaternary structure, monomer. Part of the FGAM synthase complex composed of 1 PurL, 1 PurQ and 2 PurS subunits.

The protein resides in the cytoplasm. It catalyses the reaction N(2)-formyl-N(1)-(5-phospho-beta-D-ribosyl)glycinamide + L-glutamine + ATP + H2O = 2-formamido-N(1)-(5-O-phospho-beta-D-ribosyl)acetamidine + L-glutamate + ADP + phosphate + H(+). It functions in the pathway purine metabolism; IMP biosynthesis via de novo pathway; 5-amino-1-(5-phospho-D-ribosyl)imidazole from N(2)-formyl-N(1)-(5-phospho-D-ribosyl)glycinamide: step 1/2. Its function is as follows. Part of the phosphoribosylformylglycinamidine synthase complex involved in the purines biosynthetic pathway. Catalyzes the ATP-dependent conversion of formylglycinamide ribonucleotide (FGAR) and glutamine to yield formylglycinamidine ribonucleotide (FGAM) and glutamate. The FGAM synthase complex is composed of three subunits. PurQ produces an ammonia molecule by converting glutamine to glutamate. PurL transfers the ammonia molecule to FGAR to form FGAM in an ATP-dependent manner. PurS interacts with PurQ and PurL and is thought to assist in the transfer of the ammonia molecule from PurQ to PurL. This Halorubrum lacusprofundi (strain ATCC 49239 / DSM 5036 / JCM 8891 / ACAM 34) protein is Phosphoribosylformylglycinamidine synthase subunit PurL.